Reading from the N-terminus, the 456-residue chain is UDP-N-acetylmuramoylalanine--D-glutamate ligase (456 aa).

119 to 125 (GSNGKTT) lines the ATP pocket.

Belongs to the MurCDEF family.

The protein resides in the cytoplasm. The enzyme catalyses UDP-N-acetyl-alpha-D-muramoyl-L-alanine + D-glutamate + ATP = UDP-N-acetyl-alpha-D-muramoyl-L-alanyl-D-glutamate + ADP + phosphate + H(+). Its pathway is cell wall biogenesis; peptidoglycan biosynthesis. In terms of biological role, cell wall formation. Catalyzes the addition of glutamate to the nucleotide precursor UDP-N-acetylmuramoyl-L-alanine (UMA). In Limosilactobacillus reuteri (strain DSM 20016) (Lactobacillus reuteri), this protein is UDP-N-acetylmuramoylalanine--D-glutamate ligase.